The sequence spans 244 residues: Tegument protein UL51 homolog (244 aa).

Cys-10 carries the S-palmitoyl cysteine; by host lipid modification.

The protein belongs to the herpesviridae UL51 family. As to quaternary structure, oligomerizes. Interacts with ORF55; this interaction mediates ORF55 incorporation to virions. In terms of processing, phosphorylated. Palmitoylation is necessary for Golgi localization.

The protein localises to the virion tegument. The protein resides in the host cytoplasm. It is found in the host Golgi apparatus. Its function is as follows. Plays several roles during the time course of infection, including egress of virus particles from the perinuclear space and secondary envelopment of cytoplasmic capsids that bud into specific trans-Golgi network (TGN)-derived membranes. This chain is Tegument protein UL51 homolog (8), found in Equus caballus (Horse).